A 1230-amino-acid polypeptide reads, in one-letter code: ATP-dependent helicase/nuclease subunit A (1230 aa).

The region spanning 4–480 (RNWTGPQEAA…IDLSHNFRSR (477 aa)) is the UvrD-like helicase ATP-binding domain. Residue 25–32 (AGAGSGKT) participates in ATP binding. Residues 517 to 799 (AQLEGSGPPV…RIMSIHQAKG (283 aa)) form the UvrD-like helicase C-terminal domain. The disordered stretch occupies residues 535-554 (TSVGRDTAGTADDEPDRSDE). Over residues 545-554 (ADDEPDRSDE) the composition is skewed to acidic residues.

It belongs to the helicase family. AddA subfamily. As to quaternary structure, heterodimer of AddA and AddB/RexB. Requires Mg(2+) as cofactor.

The catalysed reaction is Couples ATP hydrolysis with the unwinding of duplex DNA by translocating in the 3'-5' direction.. It carries out the reaction ATP + H2O = ADP + phosphate + H(+). In terms of biological role, the heterodimer acts as both an ATP-dependent DNA helicase and an ATP-dependent, dual-direction single-stranded exonuclease. Recognizes the chi site generating a DNA molecule suitable for the initiation of homologous recombination. The AddA nuclease domain is required for chi fragment generation; this subunit has the helicase and 3' -&gt; 5' nuclease activities. This Desulforudis audaxviator (strain MP104C) protein is ATP-dependent helicase/nuclease subunit A.